The chain runs to 545 residues: MPVITLHYEDLEKLTGTDKETIIKRVPMIGADIERVEDEYVDIEFFPDRPDLYSVEGAARAMRGFLDLETGLPEYAIKPYEVSISVSENILKIRPFLGCAVVRGVKFTSSSIKSLMDLQEDLHWGLGRNRKKVSIGVHDLKNVQPPFRYMAVDPSFEFVPLDYTEKMSMTDILEKHPKGTRFAHLVKDFEKYPIILDANDNVLSFPPIINGTLTTVTEQTTDLFIDVTGLGEAVYIALNIVVTALAERGGQIEFVRVIRPGGEELVLPDLEPKERLLTTGEVKALMGMDLTVEEIVKQLERMRFGAAALDKEAVEVKVPAYRADILHNYDLVEDIAKGYGYENIKVKVPETYTPGKSHPISLMRASVNEIMVGLGYYEVMPFTLTSEKINFENMCRPKTDDVTYVLHPISEDQTMIRTTVLPNLLEILSLNQHRELPQKIFEFGEVVSNETTGQHVAAVSIHPQANFTEVYEVVDALMREMMLPYEVKESEDPAFLEGRRADVYVNGKKLGVFGEFHPEVISNFALGYAVVGFELDLNDLIGKKI.

Residues 270–346 (LEPKERLLTT…KGYGYENIKV (77 aa)) enclose the B5 domain. The Mg(2+) site is built by D324, D330, E333, and D334.

The protein belongs to the phenylalanyl-tRNA synthetase beta subunit family. Type 2 subfamily. Tetramer of two alpha and two beta subunits. Mg(2+) is required as a cofactor.

The protein localises to the cytoplasm. It catalyses the reaction tRNA(Phe) + L-phenylalanine + ATP = L-phenylalanyl-tRNA(Phe) + AMP + diphosphate + H(+). The chain is Phenylalanine--tRNA ligase beta subunit from Methanosarcina acetivorans (strain ATCC 35395 / DSM 2834 / JCM 12185 / C2A).